The following is a 299-amino-acid chain: Regucalcin (299 aa).

Residue glutamate 18 participates in a divalent metal cation binding. The substrate site is built by arginine 101, asparagine 103, and glutamate 121. Position 144 is an N6-succinyllysine (lysine 144). 2 residues coordinate a divalent metal cation: asparagine 154 and aspartate 204. Catalysis depends on aspartate 204, which acts as the Proton donor/acceptor. N6-succinyllysine occurs at positions 244 and 253.

The protein belongs to the SMP-30/CGR1 family. In terms of assembly, monomer. Requires Zn(2+) as cofactor. It depends on Mn(2+) as a cofactor. The cofactor is Ca(2+). Mg(2+) is required as a cofactor. As to expression, mainly present in the liver. Weak expression was found in the brain, lung and kidney.

The protein localises to the cytoplasm. The enzyme catalyses D-glucono-1,5-lactone + H2O = D-gluconate + H(+). It functions in the pathway cofactor biosynthesis; L-ascorbate biosynthesis via UDP-alpha-D-glucuronate pathway; L-ascorbate from UDP-alpha-D-glucuronate: step 3/4. In terms of biological role, gluconolactonase with low activity towards other sugar lactones, including gulonolactone and galactonolactone. Catalyzes a key step in ascorbic acid (vitamin C) biosynthesis. Can also hydrolyze diisopropyl phosphorofluoridate and phenylacetate (in vitro). Calcium-binding protein. Modulates Ca(2+) signaling, and Ca(2+)-dependent cellular processes and enzyme activities. The sequence is that of Regucalcin (Rgn) from Mus musculus (Mouse).